The chain runs to 468 residues: Ribulose bisphosphate carboxylase large chain (468 aa).

N6,N6,N6-trimethyllysine is present on Lys-5. Substrate is bound by residues Asn-114 and Thr-164. The active-site Proton acceptor is the Lys-166. Substrate is bound at residue Lys-168. Mg(2+) is bound by residues Lys-192, Asp-194, and Glu-195. Lys-192 bears the N6-carboxylysine mark. Catalysis depends on His-285, which acts as the Proton acceptor. Substrate contacts are provided by Arg-286, His-318, and Ser-370.

Belongs to the RuBisCO large chain family. Type I subfamily. As to quaternary structure, heterohexadecamer of 8 large chains and 8 small chains; disulfide-linked. The disulfide link is formed within the large subunit homodimers. Mg(2+) is required as a cofactor. The disulfide bond which can form in the large chain dimeric partners within the hexadecamer appears to be associated with oxidative stress and protein turnover.

The protein localises to the plastid. It localises to the chloroplast. It carries out the reaction 2 (2R)-3-phosphoglycerate + 2 H(+) = D-ribulose 1,5-bisphosphate + CO2 + H2O. The enzyme catalyses D-ribulose 1,5-bisphosphate + O2 = 2-phosphoglycolate + (2R)-3-phosphoglycerate + 2 H(+). Functionally, ruBisCO catalyzes two reactions: the carboxylation of D-ribulose 1,5-bisphosphate, the primary event in carbon dioxide fixation, as well as the oxidative fragmentation of the pentose substrate in the photorespiration process. Both reactions occur simultaneously and in competition at the same active site. In Anthocercis viscosa (Sticky tailflower), this protein is Ribulose bisphosphate carboxylase large chain.